We begin with the raw amino-acid sequence, 253 residues long: 2-dehydro-3-deoxy-D-gluconate 5-dehydrogenase (253 aa).

NAD(+) is bound at residue 14–38 (LITGCDTGLGQGMAVGLAEAGCDIV). Substrate is bound at residue Ser-145. Residue Tyr-158 is the Proton acceptor of the active site.

This sequence belongs to the short-chain dehydrogenases/reductases (SDR) family.

The enzyme catalyses 2-dehydro-3-deoxy-D-gluconate + NAD(+) = 3-deoxy-D-glycero-2,5-hexodiulosonate + NADH + H(+). It participates in glycan metabolism; pectin degradation; 2-dehydro-3-deoxy-D-gluconate from pectin: step 5/5. Its function is as follows. Catalyzes the reduction of 2,5-diketo-3-deoxygluconate (DKII or 4,6-dihydroxy-2,5-dioxohexanoate) into 2-keto-3-deoxygluconate (KDG or 2-dehydro-3-deoxygluconate) with a concomitant oxidation of NADH. This chain is 2-dehydro-3-deoxy-D-gluconate 5-dehydrogenase (kduD), found in Dickeya dadantii (strain 3937) (Erwinia chrysanthemi (strain 3937)).